We begin with the raw amino-acid sequence, 672 residues long: Spermatid perinuclear RNA-binding protein (672 aa).

One can recognise a DZF domain in the interval 5–363 (RSFANDDRHV…ALKRPFEDGL (359 aa)). Disordered regions lie at residues 52 to 73 (TNKGTKTEGETEVKKDEAGENY) and 349 to 371 (GAGSSALKRPFEDGLGDDKDPNK). The span at 357–371 (RPFEDGLGDDKDPNK) shows a compositional bias: basic and acidic residues. Residues 387 to 453 (DLMNALMRLN…AVKVLQAMGY (67 aa)) enclose the DRBM 1 domain. The span at 466 to 476 (SDEKSDNESKN) shows a compositional bias: basic and acidic residues. A disordered region spans residues 466-499 (SDEKSDNESKNETVSSNSSNNTGNSTTETSSTLE). Low complexity predominate over residues 477-497 (ETVSSNSSNNTGNSTTETSST). The region spanning 510–576 (SGKNPVMELN…ALAALEKLFS (67 aa)) is the DRBM 2 domain. Residues Arg-612 and Arg-617 each carry the asymmetric dimethylarginine modification.

As to quaternary structure, interacts with EIF2AK2. Associates with microtubules; it is unsure whether such interaction is direct or indirect.

It localises to the cytoplasm. Its function is as follows. Involved in spermatogenesis and sperm function. Plays a role in regulation of cell growth. Binds to double-stranded DNA and RNA. Binds most efficiently to poly(I:C) RNA than to poly(dI:dC) DNA. Binds also to single-stranded poly(G) RNA. Binds non-specifically to the mRNA PRM1 3'-UTR and adenovirus VA RNA. The chain is Spermatid perinuclear RNA-binding protein (STRBP) from Homo sapiens (Human).